The chain runs to 132 residues: uncharacterized protein (132 aa).

A signal peptide spans 1–25 (MRFTKVVGFLSVLGLAAVFPLTAQA).

This is an uncharacterized protein from Bacillus subtilis (strain 168).